Consider the following 522-residue polypeptide: Secreted RxLR effector protein 105 (522 aa).

The N-terminal stretch at Met1–Ala21 is a signal peptide. The short motif at Arg48–Arg63 is the RxLR-dEER element.

It belongs to the RxLR effector family.

The protein resides in the secreted. It localises to the host nucleus. It is found in the host cytoplasm. Its function is as follows. Secreted effector that dos not suppress the host cell death induced by cell death-inducing proteins. This chain is Secreted RxLR effector protein 105, found in Plasmopara viticola (Downy mildew of grapevine).